The primary structure comprises 453 residues: Protein FAM222A (453 aa).

This sequence belongs to the FAM222 family.

The protein is Protein FAM222A (Fam222a) of Mus musculus (Mouse).